A 1102-amino-acid polypeptide reads, in one-letter code: Carbamoyl phosphate synthase large chain (1102 aa).

A carboxyphosphate synthetic domain region spans residues 1-402 (MPKRTDLKSV…ALQKALRSLE (402 aa)). ATP contacts are provided by Arg129, Arg169, Gly175, Gly176, Glu208, Ile210, Glu215, Gly241, Val242, His243, Gln285, and Glu299. One can recognise an ATP-grasp 1 domain in the interval 133–328 (KGVVERCGAE…IAKIATKLSL (196 aa)). Gln285, Glu299, and Asn301 together coordinate Mg(2+). The Mn(2+) site is built by Gln285, Glu299, and Asn301. Residues 403–546 (QKGSQLDFSS…YHYSSYDEED (144 aa)) are oligomerization domain. Positions 547–950 (EVGLHAKPSV…AFAKSQAAAN (404 aa)) are carbamoyl phosphate synthetic domain. The region spanning 677–868 (ARVLDEAGLT…MAKAAALIGT (192 aa)) is the ATP-grasp 2 domain. 10 residues coordinate ATP: Arg713, Arg752, Leu754, Glu759, Gly784, Ile785, His786, Ser787, Gln827, and Glu839. Positions 827, 839, and 841 each coordinate Mg(2+). Mn(2+) contacts are provided by Gln827, Glu839, and Asn841. The MGS-like domain maps to 951 to 1096 (NALPTEGKIF…QEHAANLSAA (146 aa)). An allosteric domain region spans residues 951–1102 (NALPTEGKIF…LSAAMEAANA (152 aa)).

It belongs to the CarB family. As to quaternary structure, composed of two chains; the small (or glutamine) chain promotes the hydrolysis of glutamine to ammonia, which is used by the large (or ammonia) chain to synthesize carbamoyl phosphate. Tetramer of heterodimers (alpha,beta)4. Mg(2+) is required as a cofactor. Mn(2+) serves as cofactor.

It catalyses the reaction hydrogencarbonate + L-glutamine + 2 ATP + H2O = carbamoyl phosphate + L-glutamate + 2 ADP + phosphate + 2 H(+). The catalysed reaction is hydrogencarbonate + NH4(+) + 2 ATP = carbamoyl phosphate + 2 ADP + phosphate + 2 H(+). The protein operates within amino-acid biosynthesis; L-arginine biosynthesis; carbamoyl phosphate from bicarbonate: step 1/1. It functions in the pathway pyrimidine metabolism; UMP biosynthesis via de novo pathway; (S)-dihydroorotate from bicarbonate: step 1/3. Large subunit of the glutamine-dependent carbamoyl phosphate synthetase (CPSase). CPSase catalyzes the formation of carbamoyl phosphate from the ammonia moiety of glutamine, carbonate, and phosphate donated by ATP, constituting the first step of 2 biosynthetic pathways, one leading to arginine and/or urea and the other to pyrimidine nucleotides. The large subunit (synthetase) binds the substrates ammonia (free or transferred from glutamine from the small subunit), hydrogencarbonate and ATP and carries out an ATP-coupled ligase reaction, activating hydrogencarbonate by forming carboxy phosphate which reacts with ammonia to form carbamoyl phosphate. The protein is Carbamoyl phosphate synthase large chain of Paenarthrobacter aurescens (strain TC1).